The following is a 236-amino-acid chain: 2,3,4,5-tetrahydropyridine-2,6-dicarboxylate N-acetyltransferase (236 aa).

It belongs to the transferase hexapeptide repeat family. DapH subfamily.

It catalyses the reaction (S)-2,3,4,5-tetrahydrodipicolinate + acetyl-CoA + H2O = L-2-acetamido-6-oxoheptanedioate + CoA. Its pathway is amino-acid biosynthesis; L-lysine biosynthesis via DAP pathway; LL-2,6-diaminopimelate from (S)-tetrahydrodipicolinate (acetylase route): step 1/3. Catalyzes the transfer of an acetyl group from acetyl-CoA to tetrahydrodipicolinate. The chain is 2,3,4,5-tetrahydropyridine-2,6-dicarboxylate N-acetyltransferase from Pediococcus pentosaceus (strain ATCC 25745 / CCUG 21536 / LMG 10740 / 183-1w).